A 247-amino-acid chain; its full sequence is Neurotrophic factor BDNF precursor form (247 aa).

Residues 1–18 (MTILFLTMVISYFGCMKA) form the signal peptide. Residues 19 to 128 (APMKEANVRG…AANMSMRVRR (110 aa)) constitute a propeptide that is removed on maturation. Residue asparagine 121 is glycosylated (N-linked (GlcNAc...) asparagine). 3 disulfide bridges follow: cysteine 141/cysteine 208, cysteine 186/cysteine 237, and cysteine 196/cysteine 239.

This sequence belongs to the NGF-beta family. In terms of assembly, monomers and homodimers. Binds to NTRK2/TRKB. Can form heterodimers with other neurotrophin family members, such as NTF3 and NTF4 (in vitro), but the physiological relevance of this is not clear. BDNF precursor form: interacts with the heterodimer formed by NGFR and SORCS2. Mature BDNF has much lower affinity for the heterodimer formed by NGFR and SORCS2. Post-translationally, N-glycosylated and glycosulfated, contrary to mature BDNF. In terms of processing, mature BDNF is produced by proteolytic removal of the propeptide, catalyzed by a FURIN family member. In addition, the precursor form is proteolytically cleaved within the propeptide, but this is not an obligatory intermediate for the production of mature BDNF. Can be converted into mature BDNF by plasmin (PLG).

Its subcellular location is the secreted. Important signaling molecule that activates signaling cascades downstream of NTRK2. During development, promotes the survival and differentiation of selected neuronal populations of the peripheral and central nervous systems. Participates in axonal growth, pathfinding and in the modulation of dendritic growth and morphology. Major regulator of synaptic transmission and plasticity at adult synapses in many regions of the CNS. The versatility of BDNF is emphasized by its contribution to a range of adaptive neuronal responses including long-term potentiation (LTP), long-term depression (LTD), certain forms of short-term synaptic plasticity, as well as homeostatic regulation of intrinsic neuronal excitability. In terms of biological role, important signaling molecule that activates signaling cascades downstream of NTRK2. Activates signaling cascades via the heterodimeric receptor formed by NGFR and SORCS2. Signaling via NGFR and SORCS2 plays a role in synaptic plasticity and long-term depression (LTD). Binding to NGFR and SORCS2 promotes neuronal apoptosis. Promotes neuronal growth cone collapse. This Ursus arctos (Brown bear) protein is Neurotrophic factor BDNF precursor form (BDNF).